The chain runs to 307 residues: Coproporphyrin III ferrochelatase (307 aa).

Residues Y12, R29, 45-46, S53, and Y124 contribute to the Fe-coproporphyrin III site; that span reads RY. Residues H181 and E263 each contribute to the Fe(2+) site.

Belongs to the ferrochelatase family.

Its subcellular location is the cytoplasm. It carries out the reaction Fe-coproporphyrin III + 2 H(+) = coproporphyrin III + Fe(2+). It functions in the pathway porphyrin-containing compound metabolism; protoheme biosynthesis. In terms of biological role, involved in coproporphyrin-dependent heme b biosynthesis. Catalyzes the insertion of ferrous iron into coproporphyrin III to form Fe-coproporphyrin III. This chain is Coproporphyrin III ferrochelatase, found in Staphylococcus epidermidis (strain ATCC 12228 / FDA PCI 1200).